A 180-amino-acid polypeptide reads, in one-letter code: ATP synthase subunit delta (180 aa).

This sequence belongs to the ATPase delta chain family. As to quaternary structure, F-type ATPases have 2 components, F(1) - the catalytic core - and F(0) - the membrane proton channel. F(1) has five subunits: alpha(3), beta(3), gamma(1), delta(1), epsilon(1). F(0) has three main subunits: a(1), b(2) and c(10-14). The alpha and beta chains form an alternating ring which encloses part of the gamma chain. F(1) is attached to F(0) by a central stalk formed by the gamma and epsilon chains, while a peripheral stalk is formed by the delta and b chains.

It localises to the cell membrane. Functionally, f(1)F(0) ATP synthase produces ATP from ADP in the presence of a proton or sodium gradient. F-type ATPases consist of two structural domains, F(1) containing the extramembraneous catalytic core and F(0) containing the membrane proton channel, linked together by a central stalk and a peripheral stalk. During catalysis, ATP synthesis in the catalytic domain of F(1) is coupled via a rotary mechanism of the central stalk subunits to proton translocation. In terms of biological role, this protein is part of the stalk that links CF(0) to CF(1). It either transmits conformational changes from CF(0) to CF(1) or is implicated in proton conduction. In Alkaliphilus metalliredigens (strain QYMF), this protein is ATP synthase subunit delta.